A 111-amino-acid chain; its full sequence is Large ribosomal subunit protein uL23 (111 aa).

The protein belongs to the universal ribosomal protein uL23 family. As to quaternary structure, part of the 50S ribosomal subunit. Contacts protein L29, and trigger factor when it is bound to the ribosome.

Its function is as follows. One of the early assembly proteins it binds 23S rRNA. One of the proteins that surrounds the polypeptide exit tunnel on the outside of the ribosome. Forms the main docking site for trigger factor binding to the ribosome. In Nitrosomonas europaea (strain ATCC 19718 / CIP 103999 / KCTC 2705 / NBRC 14298), this protein is Large ribosomal subunit protein uL23.